The chain runs to 390 residues: Formate-dependent phosphoribosylglycinamide formyltransferase (390 aa).

Residues 18 to 19 and E78 contribute to the N(1)-(5-phospho-beta-D-ribosyl)glycinamide site; that span reads EL. ATP-binding positions include R110, K151, 156–161, 191–194, and E199; these read SSGKGQ and EEFL. Residues 115–305 enclose the ATP-grasp domain; sequence DLASKELNIK…EFELHLRAFL (191 aa). Residues E264 and E276 each contribute to the Mg(2+) site. N(1)-(5-phospho-beta-D-ribosyl)glycinamide-binding positions include D283, K353, and 360–361; that span reads RR.

The protein belongs to the PurK/PurT family. As to quaternary structure, homodimer.

The catalysed reaction is N(1)-(5-phospho-beta-D-ribosyl)glycinamide + formate + ATP = N(2)-formyl-N(1)-(5-phospho-beta-D-ribosyl)glycinamide + ADP + phosphate + H(+). Its pathway is purine metabolism; IMP biosynthesis via de novo pathway; N(2)-formyl-N(1)-(5-phospho-D-ribosyl)glycinamide from N(1)-(5-phospho-D-ribosyl)glycinamide (formate route): step 1/1. Functionally, involved in the de novo purine biosynthesis. Catalyzes the transfer of formate to 5-phospho-ribosyl-glycinamide (GAR), producing 5-phospho-ribosyl-N-formylglycinamide (FGAR). Formate is provided by PurU via hydrolysis of 10-formyl-tetrahydrofolate. This chain is Formate-dependent phosphoribosylglycinamide formyltransferase, found in Prochlorococcus marinus (strain MIT 9515).